The sequence spans 122 residues: ATP-dependent Clp protease adapter protein ClpS (122 aa).

Belongs to the ClpS family. Binds to the N-terminal domain of the chaperone ClpA.

Its function is as follows. Involved in the modulation of the specificity of the ClpAP-mediated ATP-dependent protein degradation. The sequence is that of ATP-dependent Clp protease adapter protein ClpS from Pseudomonas fluorescens (strain SBW25).